The following is a 170-amino-acid chain: Putative pre-16S rRNA nuclease (170 aa).

Positions 1-18 (MGTDDRLPDRPGADDPGR) are enriched in basic and acidic residues. Residues 1–22 (MGTDDRLPDRPGADDPGRGRRI) are disordered.

The protein belongs to the YqgF nuclease family.

It localises to the cytoplasm. In terms of biological role, could be a nuclease involved in processing of the 5'-end of pre-16S rRNA. The protein is Putative pre-16S rRNA nuclease of Mycolicibacterium smegmatis (strain ATCC 700084 / mc(2)155) (Mycobacterium smegmatis).